The sequence spans 165 residues: 6,7-dimethyl-8-ribityllumazine synthase 2 (165 aa).

5-amino-6-(D-ribitylamino)uracil-binding positions include Trp-24, 56-58 (SFE), and 80-82 (LVV). Catalysis depends on Arg-88, which acts as the Proton donor. Position 113 (Ser-113) interacts with 5-amino-6-(D-ribitylamino)uracil. His-127 serves as a coordination point for (2S)-2-hydroxy-3-oxobutyl phosphate.

The protein belongs to the DMRL synthase family.

The catalysed reaction is (2S)-2-hydroxy-3-oxobutyl phosphate + 5-amino-6-(D-ribitylamino)uracil = 6,7-dimethyl-8-(1-D-ribityl)lumazine + phosphate + 2 H2O + H(+). It participates in cofactor biosynthesis; riboflavin biosynthesis; riboflavin from 2-hydroxy-3-oxobutyl phosphate and 5-amino-6-(D-ribitylamino)uracil: step 1/2. Catalyzes the formation of 6,7-dimethyl-8-ribityllumazine by condensation of 5-amino-6-(D-ribitylamino)uracil with 3,4-dihydroxy-2-butanone 4-phosphate. This is the penultimate step in the biosynthesis of riboflavin. This chain is 6,7-dimethyl-8-ribityllumazine synthase 2, found in Bradyrhizobium diazoefficiens (strain JCM 10833 / BCRC 13528 / IAM 13628 / NBRC 14792 / USDA 110).